A 316-amino-acid polypeptide reads, in one-letter code: Pantothenate kinase (316 aa).

95-102 is a binding site for ATP; it reads GSVAVGKS.

This sequence belongs to the prokaryotic pantothenate kinase family.

It localises to the cytoplasm. It catalyses the reaction (R)-pantothenate + ATP = (R)-4'-phosphopantothenate + ADP + H(+). It participates in cofactor biosynthesis; coenzyme A biosynthesis; CoA from (R)-pantothenate: step 1/5. This is Pantothenate kinase from Yersinia enterocolitica serotype O:8 / biotype 1B (strain NCTC 13174 / 8081).